The primary structure comprises 296 residues: tRNA (guanine(9)-N1)-methyltransferase (296 aa).

The segment at 1–33 (MTPETNNDETLSRPKPRAALPPVPEGMSKSQWK) is disordered. The region spanning 85–274 (TPRVNVNQKD…SVLPARKLAE (190 aa)) is the SAM-dependent MTase TRM10-type domain. Residues 181-182 (LT), glycine 201, 205-209 (DKNRH), cysteine 213, leucine 227, and 239-241 (KVL) contribute to the S-adenosyl-L-methionine site. Aspartate 205 functions as the Proton acceptor in the catalytic mechanism. Residues 277–296 (DHAQESNSSSPAEEQDAQDI) form a disordered region.

Belongs to the class IV-like SAM-binding methyltransferase superfamily. TRM10 family. As to quaternary structure, monomer.

The protein localises to the cytoplasm. Its subcellular location is the nucleus. The catalysed reaction is guanosine(9) in tRNA + S-adenosyl-L-methionine = N(1)-methylguanosine(9) in tRNA + S-adenosyl-L-homocysteine + H(+). Its function is as follows. S-adenosyl-L-methionine-dependent guanine N(1)-methyltransferase that catalyzes the formation of N(1)-methylguanine at position 9 (m1G9) in cytoplasmic tRNA. This is tRNA (guanine(9)-N1)-methyltransferase from Eremothecium gossypii (strain ATCC 10895 / CBS 109.51 / FGSC 9923 / NRRL Y-1056) (Yeast).